The chain runs to 142 residues: MKTFVAKPETVKRDWYVVDAEGKTLGRLASEIASRLRGKHKAEYTPHVDAGDYIIVINAEKVAVTGNKAKDKVYYRHSEFPGGLKSITFEKLIDRKPEMVLELAVKGMLPRGPLGRAMYRKLKVYAGAEHNHVAQQPQVLDI.

Belongs to the universal ribosomal protein uL13 family. In terms of assembly, part of the 50S ribosomal subunit.

Its function is as follows. This protein is one of the early assembly proteins of the 50S ribosomal subunit, although it is not seen to bind rRNA by itself. It is important during the early stages of 50S assembly. The chain is Large ribosomal subunit protein uL13 from Vibrio parahaemolyticus serotype O3:K6 (strain RIMD 2210633).